The chain runs to 192 residues: GTP-binding protein RHO2 (192 aa).

Position 14 to 21 (glycine 14 to threonine 21) interacts with GTP. The short motif at tyrosine 36–tyrosine 44 is the Effector region element. GTP is bound by residues aspartate 61 to glutamine 65 and leucine 119 to aspartate 122. Cysteine 188 carries S-palmitoyl cysteine lipidation. Residue cysteine 189 is modified to Cysteine methyl ester. Cysteine 189 is lipidated: S-geranylgeranyl cysteine. Residues isoleucine 190–leucine 192 constitute a propeptide, removed in mature form.

Belongs to the small GTPase superfamily. Rho family. In terms of assembly, interacts with BEM4.

It localises to the cell membrane. It catalyses the reaction GTP + H2O = GDP + phosphate + H(+). This is GTP-binding protein RHO2 (RHO2) from Saccharomyces cerevisiae (strain ATCC 204508 / S288c) (Baker's yeast).